The sequence spans 993 residues: uncharacterized protein (993 aa).

Positions 1 to 24 are cleaved as a signal peptide; it reads MLLFKFNFTTAFLFTILAFAQARS. N-linked (GlcNAc...) asparagine glycans are attached at residues asparagine 7, asparagine 44, asparagine 89, asparagine 121, asparagine 138, asparagine 161, asparagine 169, asparagine 232, asparagine 361, asparagine 386, asparagine 393, asparagine 423, asparagine 447, asparagine 480, and asparagine 488. Glutamate 504 is an active-site residue. N-linked (GlcNAc...) asparagine glycosylation is found at asparagine 545, asparagine 548, and asparagine 614. Residue aspartate 672 is the Proton donor of the active site. Asparagine 673, asparagine 814, asparagine 826, asparagine 835, asparagine 846, asparagine 910, asparagine 940, and asparagine 987 each carry an N-linked (GlcNAc...) asparagine glycan.

The protein belongs to the glycosyl hydrolase 31 family.

This is an uncharacterized protein from Schizosaccharomyces pombe (strain 972 / ATCC 24843) (Fission yeast).